Here is a 124-residue protein sequence, read N- to C-terminus: MPTIKQLIRKKRQPNLNVTKSPALRGCPQRRGTCTRVYTITPKKPNSALRKVARVRLTSGIEITAYIPGIGHNLQEHSSVLVRGGRVKDLPGVRYHIIRGTLDAVGVKDRQQGRSKYGVKIKNK.

This sequence belongs to the universal ribosomal protein uS12 family. In terms of assembly, part of the 30S ribosomal subunit.

Its subcellular location is the plastid. Functionally, with S4 and S5 plays an important role in translational accuracy. Located at the interface of the 30S and 50S subunits. The polypeptide is Small ribosomal subunit protein uS12cz/uS12cy (rps12-A) (Epifagus virginiana (Beechdrops)).